The primary structure comprises 235 residues: Ribonuclease P protein component 3 (235 aa).

It belongs to the eukaryotic/archaeal RNase P protein component 3 family. Consists of a catalytic RNA component and at least 4-5 protein subunits.

It is found in the cytoplasm. The enzyme catalyses Endonucleolytic cleavage of RNA, removing 5'-extranucleotides from tRNA precursor.. Functionally, part of ribonuclease P, a protein complex that generates mature tRNA molecules by cleaving their 5'-ends. The protein is Ribonuclease P protein component 3 of Haloarcula marismortui (strain ATCC 43049 / DSM 3752 / JCM 8966 / VKM B-1809) (Halobacterium marismortui).